A 267-amino-acid polypeptide reads, in one-letter code: MKEKRLIIKRSGYPSKGEIVIGTVKRVLDFGAFVSLDEYEGREGMVHISEVASGWIKDIREHVKKGQKVICKVLDVNPKRGHIDLSIKDVNERQRREKLQQWKNEMKAFKWLEIIGEKLNIDFKELEKIGKKLMKEYDSVYSAFEEAAFEGYEVLAPIVGEEFAKEMAEIARENIKPKRVKVRGYFELKSSASDGIERIKKALLEAKKALVNGVEMKLEYVGAPKYRIVVEADDYKTAENVLKKATENVLKAIKKLGGEGNFIREAA.

The 72-residue stretch at 17–88 folds into the S1 motif domain; that stretch reads GEIVIGTVKR…KRGHIDLSIK (72 aa).

The protein belongs to the eIF-2-alpha family. Heterotrimer composed of an alpha, a beta and a gamma chain.

Its function is as follows. eIF-2 functions in the early steps of protein synthesis by forming a ternary complex with GTP and initiator tRNA. The protein is Translation initiation factor 2 subunit alpha (eif2a) of Archaeoglobus fulgidus (strain ATCC 49558 / DSM 4304 / JCM 9628 / NBRC 100126 / VC-16).